The chain runs to 128 residues: L-ectoine synthase (128 aa).

The protein belongs to the ectoine synthase family.

The catalysed reaction is (2S)-4-acetamido-2-aminobutanoate = L-ectoine + H2O. It functions in the pathway amine and polyamine biosynthesis; ectoine biosynthesis; L-ectoine from L-aspartate 4-semialdehyde: step 3/3. Catalyzes the circularization of gamma-N-acetyl-alpha,gamma-diaminobutyric acid (ADABA) to ectoine (1,4,5,6-tetrahydro-2-methyl-4-pyrimidine carboxylic acid), which is an excellent osmoprotectant. The sequence is that of L-ectoine synthase from Virgibacillus pantothenticus.